The sequence spans 261 residues: Zinc import ATP-binding protein ZnuC (261 aa).

An ABC transporter domain is found at 6-221 (IRLEKVAVRF…PAFVELFGNN (216 aa)). 38–45 (GPNGAGKT) lines the ATP pocket.

Belongs to the ABC transporter superfamily. Zinc importer (TC 3.A.1.15.5) family. As to quaternary structure, the complex is composed of two ATP-binding proteins (ZnuC), two transmembrane proteins (ZnuB) and a solute-binding protein (ZnuA).

Its subcellular location is the cell inner membrane. It catalyses the reaction Zn(2+)(out) + ATP(in) + H2O(in) = Zn(2+)(in) + ADP(in) + phosphate(in) + H(+)(in). Part of the ABC transporter complex ZnuABC involved in zinc import. Responsible for energy coupling to the transport system. This chain is Zinc import ATP-binding protein ZnuC, found in Pseudomonas fluorescens (strain Pf0-1).